The primary structure comprises 1147 residues: Multiple epidermal growth factor-like domains protein 10 (1147 aa).

The first 25 residues, 1 to 25, serve as a signal peptide directing secretion; it reads MAISSSSCLGLICSLLCHWVGTASS. The tract at residues 1–857 is necessary for interaction with AP2M1, self-assembly and formation of the irregular, mosaic-like adhesion pattern; the sequence is MAISSSSCLG…ALPADSYQIG (857 aa). At 26 to 857 the chain is on the extracellular side; the sequence is LNLEDPNVCS…ALPADSYQIG (832 aa). Residues 30–107 enclose the EMI domain; it reads DPNVCSHWES…FYESRDMCVP (78 aa). 47 disulfide bridges follow: cysteine 34–cysteine 95, cysteine 60–cysteine 69, cysteine 94–cysteine 105, cysteine 109–cysteine 124, cysteine 126–cysteine 135, cysteine 148–cysteine 160, cysteine 154–cysteine 167, cysteine 169–cysteine 178, cysteine 191–cysteine 203, cysteine 197–cysteine 210, cysteine 212–cysteine 221, cysteine 234–cysteine 246, cysteine 240–cysteine 253, cysteine 255–cysteine 264, cysteine 281–cysteine 289, cysteine 283–cysteine 296, cysteine 298–cysteine 307, cysteine 320–cysteine 332, cysteine 326–cysteine 339, cysteine 341–cysteine 350, cysteine 409–cysteine 421, cysteine 415–cysteine 428, cysteine 430–cysteine 439, cysteine 456–cysteine 464, cysteine 458–cysteine 471, cysteine 473–cysteine 482, cysteine 495–cysteine 507, cysteine 501–cysteine 514, cysteine 516–cysteine 525, cysteine 542–cysteine 550, cysteine 544–cysteine 557, cysteine 559–cysteine 568, cysteine 581–cysteine 593, cysteine 587–cysteine 600, cysteine 602–cysteine 611, cysteine 669–cysteine 681, cysteine 675–cysteine 688, cysteine 690–cysteine 699, cysteine 716–cysteine 724, cysteine 718–cysteine 731, cysteine 733–cysteine 742, cysteine 755–cysteine 767, cysteine 761–cysteine 774, cysteine 776–cysteine 785, cysteine 802–cysteine 810, cysteine 804–cysteine 817, and cysteine 819–cysteine 828. 15 consecutive EGF-like domains span residues 101–136, 144–179, 187–222, 230–265, 278–308, 316–351, 405–440, 453–483, 491–526, 539–569, 577–612, 665–700, 713–743, 751–786, and 799–829; these read SRDM…TNCS, WGPH…WRCE, YGND…AFCE, HGPH…TVCG, SQEC…ERCQ, YGVR…ELCE, YGEA…TDCS, SSRC…VDCS, WGFG…AKCE, AERC…VHCD, WGPN…TTCQ, FGKN…SDCS, IHTC…LYCT, YGKD…RHCE, and RQIC…ARCD. An N-linked (GlcNAc...) asparagine glycan is attached at asparagine 134. Asparagine 496 is a glycosylation site (N-linked (GlcNAc...) asparagine). Residues 858–878 traverse the membrane as a helical segment; it reads AIAGIVVLVLVVLFLLALFII. Residues 879–1147 lie on the Cytoplasmic side of the membrane; it reads YRHKQKRKES…STSSSSSSSE (269 aa). The tract at residues 945-1147 is necessary for formation of large intracellular vacuoles; the sequence is RDRMTIAKSK…STSSSSSSSE (203 aa). Tyrosine 1030 is modified (phosphotyrosine). The interval 1093-1147 is disordered; sequence HVTQDPYDLPKNSHIPCHYDLLPVRDSSSSPKREDGGGSNSTSSNSTSSSSSSSE. The segment covering 1132-1147 has biased composition (low complexity); that stretch reads NSTSSNSTSSSSSSSE.

This sequence belongs to the MEGF family. Homomer. Interacts with GULP1 and ABCA1. Interacts with AP2M1. Does not interact with MEGF11. Binds with high affinity to complement C1q. Interacts (via the cytoplasmic domain) with NOTCH1 (via NICD domain). Post-translationally, ubiquitinated; mono- and polyubiquitinated forms are detected. Phosphorylated on tyrosine residues. Phosphorylation at Tyr-1030 may be important for muscle cell proliferation. In terms of tissue distribution, expressed in cerebellum (at protein level). Expressed in kidney, stellate cells of the cerebellum and macrophage cell lines.

The protein localises to the cell membrane. It localises to the cell projection. It is found in the phagocytic cup. Functionally, membrane receptor involved in phagocytosis by macrophages and astrocytes of apoptotic cells. Receptor for C1q, an eat-me signal, that binds phosphatidylserine expressed on the surface of apoptotic cells. Cooperates with ABCA1 within the process of engulfment. Promotes the formation of large intracellular vacuoles and may be responsible for the uptake of amyloid-beta peptides. Necessary for astrocyte-dependent apoptotic neuron clearance in the developing cerebellum. Plays a role in muscle cell proliferation, adhesion and motility. Is also an essential factor in the regulation of myogenesis. Controls the balance between skeletal muscle satellite cells proliferation and differentiation through regulation of the notch signaling pathway. May also function in the mosaic spacing of specific neuron subtypes in the retina through homotypic retinal neuron repulsion. Mosaics provide a mechanism to distribute each cell type evenly across the retina, ensuring that all parts of the visual field have access to a full set of processing elements. This chain is Multiple epidermal growth factor-like domains protein 10, found in Mus musculus (Mouse).